The primary structure comprises 310 residues: Carbamate kinase 1 (310 aa).

Belongs to the carbamate kinase family.

The protein resides in the cytoplasm. The catalysed reaction is hydrogencarbonate + NH4(+) + ATP = carbamoyl phosphate + ADP + H2O + H(+). It participates in metabolic intermediate metabolism; carbamoyl phosphate degradation; CO(2) and NH(3) from carbamoyl phosphate: step 1/1. The sequence is that of Carbamate kinase 1 (arcC1) from Staphylococcus aureus (strain COL).